A 311-amino-acid chain; its full sequence is Lipoyl synthase (311 aa).

[4Fe-4S] cluster is bound by residues Cys-58, Cys-63, Cys-69, Cys-84, Cys-88, Cys-91, and Ser-298. The Radical SAM core domain maps to 70 to 287; it reads FGHGTATFMI…EQEALAMGFR (218 aa).

The protein belongs to the radical SAM superfamily. Lipoyl synthase family. Requires [4Fe-4S] cluster as cofactor.

The protein resides in the cytoplasm. It carries out the reaction [[Fe-S] cluster scaffold protein carrying a second [4Fe-4S](2+) cluster] + N(6)-octanoyl-L-lysyl-[protein] + 2 oxidized [2Fe-2S]-[ferredoxin] + 2 S-adenosyl-L-methionine + 4 H(+) = [[Fe-S] cluster scaffold protein] + N(6)-[(R)-dihydrolipoyl]-L-lysyl-[protein] + 4 Fe(3+) + 2 hydrogen sulfide + 2 5'-deoxyadenosine + 2 L-methionine + 2 reduced [2Fe-2S]-[ferredoxin]. Its pathway is protein modification; protein lipoylation via endogenous pathway; protein N(6)-(lipoyl)lysine from octanoyl-[acyl-carrier-protein]: step 2/2. Catalyzes the radical-mediated insertion of two sulfur atoms into the C-6 and C-8 positions of the octanoyl moiety bound to the lipoyl domains of lipoate-dependent enzymes, thereby converting the octanoylated domains into lipoylated derivatives. The sequence is that of Lipoyl synthase from Thiobacillus denitrificans (strain ATCC 25259 / T1).